A 242-amino-acid polypeptide reads, in one-letter code: tRNA uridine(34) hydroxylase (242 aa).

The Rhodanese domain maps to 128 to 222 (DGREVVMLDT…YFEETGGPGY (95 aa)). Cys182 acts as the Cysteine persulfide intermediate in catalysis.

This sequence belongs to the TrhO family.

It catalyses the reaction uridine(34) in tRNA + AH2 + O2 = 5-hydroxyuridine(34) in tRNA + A + H2O. In terms of biological role, catalyzes oxygen-dependent 5-hydroxyuridine (ho5U) modification at position 34 in tRNAs. This Bordetella avium (strain 197N) protein is tRNA uridine(34) hydroxylase.